Reading from the N-terminus, the 430-residue chain is 3-phosphoshikimate 1-carboxyvinyltransferase (430 aa).

3 residues coordinate 3-phosphoshikimate: Lys-20, Ser-21, and Arg-25. A phosphoenolpyruvate-binding site is contributed by Lys-20. Phosphoenolpyruvate contacts are provided by Gly-92 and Arg-120. 4 residues coordinate 3-phosphoshikimate: Ser-166, Gln-168, Asp-312, and Lys-339. A phosphoenolpyruvate-binding site is contributed by Gln-168. Asp-312 serves as the catalytic Proton acceptor. Phosphoenolpyruvate contacts are provided by Arg-343 and Arg-387.

Belongs to the EPSP synthase family. In terms of assembly, monomer.

It is found in the cytoplasm. The enzyme catalyses 3-phosphoshikimate + phosphoenolpyruvate = 5-O-(1-carboxyvinyl)-3-phosphoshikimate + phosphate. Its pathway is metabolic intermediate biosynthesis; chorismate biosynthesis; chorismate from D-erythrose 4-phosphate and phosphoenolpyruvate: step 6/7. Functionally, catalyzes the transfer of the enolpyruvyl moiety of phosphoenolpyruvate (PEP) to the 5-hydroxyl of shikimate-3-phosphate (S3P) to produce enolpyruvyl shikimate-3-phosphate and inorganic phosphate. This chain is 3-phosphoshikimate 1-carboxyvinyltransferase, found in Lactococcus lactis subsp. cremoris (strain SK11).